A 502-amino-acid chain; its full sequence is MAILVSLLFLAIALTFFLLKLNEKREKKPNLPPSPPNLPIIGNLHQLGNLPHRSLRSLANELGPLILLHLGHIPTLIVSTAEIAEEILKTHDLIFASRPSTTAARRIFYDCTDVAFSPYGEYWRQVRKICVLELLSIKRVNSYRSIREEEVGLMMERISQSCSTGEAVNLSELLLLLSSGTITRVAFGKKYEGEEERKNKFADLATELTTLMGAFFVGDYFPSFAWVDVLTGMDARLKRNHGELDAFVDHVIDDHLLSRKANGSDGVEQKDLVDVLLHLQKDSSLGVHLNRNNLKAVILDMFSGGTDTTAVTLEWAMAELIKHPDVMEKAQQEVRRVVGKKAKVEEEDLHQLHYLKLIIKETLRLHPVAPLLVPRESTRDVVIRGYHIPAKTRVFINAWAIGRDPKSWENAEEFLPERFVNNSVDFKGQDFQLIPFGAGRRGCPGIAFGISSVEISLANLLYWFNWELPGDLTKEDLDMSEAVGITVHMKFPLQLVAKRHLS.

Residues 7–21 (LLFLAIALTFFLLKL) form a helical membrane-spanning segment. Heme is bound at residue C443.

It belongs to the cytochrome P450 family. It depends on heme as a cofactor. As to expression, mesocarp.

It localises to the microsome membrane. It is found in the endoplasmic reticulum membrane. In terms of biological role, involved in the metabolism of compounds associated with the development of flavor in the ripening fruit process, possibly by acting as trans-cinnamic acid 4-hydrolase. This is Cytochrome P450 71A1 (CYP71A1) from Persea americana (Avocado).